Here is a 345-residue protein sequence, read N- to C-terminus: Tyrosine-binding protein (345 aa).

A signal peptide spans 1-23; sequence MIKSKKILSLIIAGVLGVSMLTG. Cysteine 24 is lipidated: N-palmitoyl cysteine. Cysteine 24 is lipidated: S-diacylglycerol cysteine.

In terms of assembly, the complex is probably composed of two ATP-binding proteins (CDR20291_0806), two transmembrane proteins (CDR20291_0807) and a solute-binding protein (CDR20291_0805).

It localises to the cell membrane. Probably part of an ABC transporter complex involved in tyrosine uptake. May also import phenylalanine. The sequence is that of Tyrosine-binding protein from Clostridioides difficile (strain R20291) (Peptoclostridium difficile).